A 130-amino-acid chain; its full sequence is Small ribosomal subunit protein uS9 (130 aa).

The protein belongs to the universal ribosomal protein uS9 family.

This chain is Small ribosomal subunit protein uS9, found in Aliivibrio salmonicida (strain LFI1238) (Vibrio salmonicida (strain LFI1238)).